We begin with the raw amino-acid sequence, 418 residues long: Protein-lysine N-trimethyltransferase SMYD5 (418 aa).

The SET domain occupies 21 to 352; it reads VSVEVRFVSS…PGEEICISYL (332 aa). An MYND-type zinc finger spans residues 98-136; the sequence is PELCTVRKDLHQNCPHCQVMYCSAECRLAATEQYHQVLC. Position 351 (Tyr-351) interacts with S-adenosyl-L-methionine. The tract at residues 385 to 418 is disordered; sequence ADEPNVTSEEEEEEEEEEEGEPEDAELGDEMTDV.

The protein belongs to the class V-like SAM-binding methyltransferase superfamily. In terms of assembly, interacts with the N-CoR complex. Interacts with EHMT2 and CBX5. In terms of processing, ubiquitinated and degradaed by the proteasome in response to mild hypothermia (32 degrees Celsius), relieving repression of the SP1 gene.

Its subcellular location is the cytoplasm. The catalysed reaction is L-lysyl-[protein] + 3 S-adenosyl-L-methionine = N(6),N(6),N(6)-trimethyl-L-lysyl-[protein] + 3 S-adenosyl-L-homocysteine + 3 H(+). It carries out the reaction L-lysyl(20)-[histone H4] + 3 S-adenosyl-L-methionine = N(6),N(6),N(6)-trimethyl-L-lysyl(20)-[histone H4] + 3 S-adenosyl-L-homocysteine + 3 H(+). It catalyses the reaction L-lysyl(36)-[histone H3] + 3 S-adenosyl-L-methionine = N(6),N(6),N(6)-trimethyl-L-lysyl(36)-[histone H3] + 3 S-adenosyl-L-homocysteine + 3 H(+). Protein-lysine N-trimethyltransferase that specifically catalyzes trimethylation of 'Lys-22' of the RPL40/eL40 subunit of the 60S ribosome, thereby promoting translation elongation and protein synthesis. May also act as a histone methyltransferase in the context of histone octamers, but not on nucleosome substrates: trimethylates 'Lys-36' of histone H3 and 'Lys-20' of histone H4 to form H3K36me3 and H4K20me3, respectively. The histone methyltransferase activity, which is independent of its SET domain, is however unsure in vivo. In association with the NCoR corepressor complex, involved in the repression of toll-like receptor 4 (TLR4)-target inflammatory genes in macrophages, possibly by catalyzing the formation of H4K20me3 at the gene promoters. Plays an important role in embryonic stem (ES) cell self-renewal and differentiation. Maintains genome stability of ES cells during differentiation through regulation of heterochromatin formation and repression of endogenous repetitive DNA elements by promoting H4K20me3 marks. Acts as a regulator of the hypothermia response: its degradation in response to mild hypothermia relieves the formation of H3K36me3 at gene promoters, allowing expression of the neuroprotective gene SP1. This chain is Protein-lysine N-trimethyltransferase SMYD5, found in Homo sapiens (Human).